Here is a 111-residue protein sequence, read N- to C-terminus: Large ribosomal subunit protein uL24 (111 aa).

It belongs to the universal ribosomal protein uL24 family. As to quaternary structure, part of the 50S ribosomal subunit.

Functionally, one of two assembly initiator proteins, it binds directly to the 5'-end of the 23S rRNA, where it nucleates assembly of the 50S subunit. One of the proteins that surrounds the polypeptide exit tunnel on the outside of the subunit. The chain is Large ribosomal subunit protein uL24 from Cytophaga hutchinsonii (strain ATCC 33406 / DSM 1761 / CIP 103989 / NBRC 15051 / NCIMB 9469 / D465).